The chain runs to 122 residues: Large ribosomal subunit protein uL18 (122 aa).

Belongs to the universal ribosomal protein uL18 family. Part of the 50S ribosomal subunit; part of the 5S rRNA/L5/L18/L25 subcomplex. Contacts the 5S and 23S rRNAs.

Functionally, this is one of the proteins that bind and probably mediate the attachment of the 5S RNA into the large ribosomal subunit, where it forms part of the central protuberance. This chain is Large ribosomal subunit protein uL18, found in Lachnospira eligens (strain ATCC 27750 / DSM 3376 / VPI C15-48 / C15-B4) (Eubacterium eligens).